Here is a 239-residue protein sequence, read N- to C-terminus: Tubulin beta-3 chain (239 aa).

Asn22 contacts GTP. A disordered region spans residues 207–239 (EESNMNDLVSEYQQYQDASAEPXXEQEEDYEEA). Over residues 230 to 239 (XEQEEDYEEA) the composition is skewed to acidic residues.

Belongs to the tubulin family. In terms of assembly, dimer of alpha and beta chains. A typical microtubule is a hollow water-filled tube with an outer diameter of 25 nm and an inner diameter of 15 nM. Alpha-beta heterodimers associate head-to-tail to form protofilaments running lengthwise along the microtubule wall with the beta-tubulin subunit facing the microtubule plus end conferring a structural polarity. Microtubules usually have 13 protofilaments but different protofilament numbers can be found in some organisms and specialized cells. Mg(2+) is required as a cofactor.

Its subcellular location is the cytoplasm. It is found in the cytoskeleton. In terms of biological role, tubulin is the major constituent of microtubules, a cylinder consisting of laterally associated linear protofilaments composed of alpha- and beta-tubulin heterodimers. Microtubules grow by the addition of GTP-tubulin dimers to the microtubule end, where a stabilizing cap forms. Below the cap, tubulin dimers are in GDP-bound state, owing to GTPase activity of alpha-tubulin. This is Tubulin beta-3 chain (TUBB3) from Anemia phyllitidis (Fern).